The following is a 141-amino-acid chain: Endoribonuclease YbeY (141 aa).

Zn(2+)-binding residues include His-105, His-109, and Asp-115.

It belongs to the endoribonuclease YbeY family. The cofactor is Zn(2+).

The protein localises to the cytoplasm. In terms of biological role, single strand-specific metallo-endoribonuclease involved in late-stage 70S ribosome quality control and in maturation of the 3' terminus of the 16S rRNA. This Chloroherpeton thalassium (strain ATCC 35110 / GB-78) protein is Endoribonuclease YbeY.